The primary structure comprises 850 residues: Bifunctional levopimaradiene synthase, chloroplastic (850 aa).

A chloroplast-targeting transit peptide spans 1-52 (MALPSSSLSSQIHTGATTQCIPHFHGSLNAGTSAGKRRSLYLRWGKGPSKIV). Lysine 250 lines the substrate pocket. Residues aspartate 383 and aspartate 385 each coordinate Mg(2+). The DXDD motif motif lies at 383-386 (DIDD). Lysine 470 serves as a coordination point for substrate. Mg(2+) contacts are provided by aspartate 602, aspartate 606, asparagine 746, threonine 750, and glutamate 754. The short motif at 602-606 (DDLYD) is the DDXXD motif element.

It belongs to the terpene synthase family. Tpsd subfamily. The cofactor is Mg(2+). As to expression, expressed in young tissues such as flushing buds and green bark tissues. Lower levels in mature needles and bark.

The protein localises to the plastid. The protein resides in the chloroplast. The catalysed reaction is (2E,6E,10E)-geranylgeranyl diphosphate = (+)-copalyl diphosphate. The enzyme catalyses (+)-copalyl diphosphate = abieta-8(14),12-diene + diphosphate. It carries out the reaction (+)-copalyl diphosphate = neoabietadiene + diphosphate. It participates in terpene metabolism; oleoresin biosynthesis. In terms of biological role, involved in defensive oleoresin formation in conifers in response to insect attack or other injury. Involved in diterpene (C20) olefins biosynthesis. Bifunctional enzyme that catalyzes two sequential cyclizations of geranylgeranyl diphosphate (GGPP) to levopimaradiene. Levopimaradiene is the major products of the enzyme followed by abietadiene, neoabietadiene and palustradiene. No activity with geranyl diphosphate (GPP) or farnesyl diphosphate (FPP) as substrate. In Pinus taeda (Loblolly pine), this protein is Bifunctional levopimaradiene synthase, chloroplastic (LPS).